The following is a 288-amino-acid chain: Protease HtpX homolog (288 aa).

A run of 2 helical transmembrane segments spans residues 1–21 (MHTI…LLAG) and 23–43 (IIGG…MNFF). Histidine 130 is a binding site for Zn(2+). The active site involves glutamate 131. Histidine 134 serves as a coordination point for Zn(2+). A run of 2 helical transmembrane segments spans residues 140–160 (ILIS…AEMA) and 175–195 (IGGL…AMII). Residue glutamate 204 participates in Zn(2+) binding.

It belongs to the peptidase M48B family. Zn(2+) serves as cofactor.

It localises to the cell inner membrane. This chain is Protease HtpX homolog, found in Persephonella marina (strain DSM 14350 / EX-H1).